The chain runs to 702 residues: Cell adhesion molecule CEACAM5 (702 aa).

Residues 1–34 form the signal peptide; sequence MESPSAPPHRWCIPWQRLLLTASLLTFWNPPTTA. An Ig-like V-type domain is found at 35–144; the sequence is KLTIESTPFN…TGQFRVYPEL (110 aa). Residues N104, N115, N152, N182, N197, N204, N208, N246, N256, N274, N288, N292, N309, N330, N351, N360, N375, N432, N466, N480, N508, N529, N553, N560, N580, N612, N650, and N665 are each glycosylated (N-linked (GlcNAc...) asparagine). Ig-like C2-type domains follow at residues 145-232, 240-315, 323-410, 418-495, 501-588, and 593-675; these read PKPS…VILN, PTIS…TVTT, PKPF…VILN, PTIS…KTIT, PKPS…VTLD, and PDTP…ITVS. An intrachain disulfide couples C167 to C215. C259 and C299 are joined by a disulfide. The cysteines at positions 345 and 393 are disulfide-linked. The cysteines at positions 437 and 477 are disulfide-linked. C523 and C571 are disulfide-bonded. An intrachain disulfide couples C615 to C655. A685 is lipidated: GPI-anchor amidated alanine. The propeptide at 686–702 is removed in mature form; that stretch reads GATVGIMIGVLVGVALI.

The protein belongs to the immunoglobulin superfamily. CEA family. As to quaternary structure, homodimer. In terms of processing, complex immunoreactive glycoprotein with a MW of 180 kDa comprising 60% carbohydrate. Expressed in columnar epithelial and goblet cells of the colon (at protein level). Found in adenocarcinomas of endodermally derived digestive system epithelium and fetal colon.

Its subcellular location is the cell membrane. It localises to the apical cell membrane. The protein resides in the cell surface. Functionally, cell surface glycoprotein that plays a role in cell adhesion, intracellular signaling and tumor progression. Mediates homophilic and heterophilic cell adhesion with other carcinoembryonic antigen-related cell adhesion molecules, such as CEACAM6. Plays a role as an oncogene by promoting tumor progression; induces resistance to anoikis of colorectal carcinoma cells. (Microbial infection) Receptor for E.coli Dr adhesins. Binding of E.coli Dr adhesins leads to dissociation of the homodimer. In Homo sapiens (Human), this protein is Cell adhesion molecule CEACAM5.